The following is a 384-amino-acid chain: MKFIDEAKIEVAAGKGGNGATSFRREKFVPRGGPDGGDGGKGGSVWAEADENTNTLVEYRFVKRYQAKNGEKGHGSDRYGAGADDIVLKMPVGTLIRDLDTDEIVADLTYHGQRVCLAKGGKGGLGNIHFKSSVNRAPKQSTPGEEGEARSLQLELKVLADVGLLGMPNAGKSTLITAVSAARPKIANYPFTTLHPNLGVVRIDENHSFVMADIPGLIEGAAEGAGLGHRFLKHLSRTGLLLHVVDLAPFDETVNPAEEALAIINELRKYDEELYGKPRWLVLNKLDMLDEEEAQTRTAAFLEAVGWDYPKPDDRFQFDMETPRLFQISALTHQGTQELVHQINQYLTEKKRIEAEKAEAEKAAANVEIIEQQPKTDTGVFKPE.

Residues 1-159 enclose the Obg domain; sequence MKFIDEAKIE…RSLQLELKVL (159 aa). Residues 20–46 form a disordered region; that stretch reads ATSFRREKFVPRGGPDGGDGGKGGSVW. Residues 33–43 are compositionally biased toward gly residues; sequence GPDGGDGGKGG. The region spanning 160-348 is the OBG-type G domain; it reads ADVGLLGMPN…LVHQINQYLT (189 aa). Residues 166-173, 191-195, 213-216, 284-287, and 329-331 each bind GTP; these read GMPNAGKS, FTTLH, DIPG, NKLD, and SAL. Positions 173 and 193 each coordinate Mg(2+).

This sequence belongs to the TRAFAC class OBG-HflX-like GTPase superfamily. OBG GTPase family. Monomer. The cofactor is Mg(2+).

It is found in the cytoplasm. An essential GTPase which binds GTP, GDP and possibly (p)ppGpp with moderate affinity, with high nucleotide exchange rates and a fairly low GTP hydrolysis rate. Plays a role in control of the cell cycle, stress response, ribosome biogenesis and in those bacteria that undergo differentiation, in morphogenesis control. In Neisseria meningitidis serogroup C / serotype 2a (strain ATCC 700532 / DSM 15464 / FAM18), this protein is GTPase Obg.